Here is a 103-residue protein sequence, read N- to C-terminus: Large ribosomal subunit protein bL21 (103 aa).

Belongs to the bacterial ribosomal protein bL21 family. Part of the 50S ribosomal subunit. Contacts protein L20.

Functionally, this protein binds to 23S rRNA in the presence of protein L20. This Pseudomonas aeruginosa (strain LESB58) protein is Large ribosomal subunit protein bL21.